A 130-amino-acid chain; its full sequence is Small ribosomal subunit protein uS11 (130 aa).

It belongs to the universal ribosomal protein uS11 family. As to quaternary structure, part of the 30S ribosomal subunit. Interacts with proteins S7 and S18. Binds to IF-3.

Located on the platform of the 30S subunit, it bridges several disparate RNA helices of the 16S rRNA. Forms part of the Shine-Dalgarno cleft in the 70S ribosome. The sequence is that of Small ribosomal subunit protein uS11 from Nitrobacter hamburgensis (strain DSM 10229 / NCIMB 13809 / X14).